The chain runs to 881 residues: Mechanosensitive ion channel protein 4 (881 aa).

The tract at residues 35 to 245 is disordered; the sequence is FWHNDKSSKP…EEEDPFSEED (211 aa). A compositionally biased stretch (basic and acidic residues) spans 56–66; it reads FMRRSSEKSEE. 3 stretches are compositionally biased toward polar residues: residues 73–82, 100–118, and 206–230; these read LINQFLNKQK, QKNT…SASP, and TPRS…NQGG. Positions 234–245 are enriched in acidic residues; that stretch reads LEEEEDPFSEED. A run of 4 helical transmembrane segments spans residues 255–275, 297–317, 339–359, and 377–397; these read ICVW…SLIC, VMVL…KLFV, KPVQ…FLFD, and VLIC…LVKV. Residues 457 to 501 form a disordered region; the sequence is GPKAVSSPPQVTVGSGRLQKSPSRVGKSPVLSRSGSKKEGGEEGI. A compositionally biased stretch (polar residues) spans 463 to 478; the sequence is SPPQVTVGSGRLQKSP. A compositionally biased stretch (basic and acidic residues) spans 492–501; the sequence is SKKEGGEEGI. 2 consecutive transmembrane segments (helical) span residues 643–663 and 678–698; these read IVDV…LGIA and VVFV…FVFV.

It belongs to the MscS (TC 1.A.23) family.

Its subcellular location is the membrane. Mechanosensitive channel that opens in response to stretch forces in the membrane lipid bilayer. The chain is Mechanosensitive ion channel protein 4 (MSL4) from Arabidopsis thaliana (Mouse-ear cress).